Consider the following 329-residue polypeptide: Protein-arginine N-acetylglucosaminyltransferase NleB1 (329 aa).

N-beta-linked (GlcNAc) arginine; by autocatalysis glycosylation occurs at Arg13. Position 48–50 (48–50) interacts with UDP-N-acetyl-alpha-D-glucosamine; that stretch reads QWF. An N-beta-linked (GlcNAc) arginine; by autocatalysis glycan is attached at Arg53. Residue Tyr72 coordinates UDP-N-acetyl-alpha-D-glucosamine. N-beta-linked (GlcNAc) arginine; by autocatalysis glycosylation occurs at Arg159. A UDP-N-acetyl-alpha-D-glucosamine-binding site is contributed by 219–222; the sequence is YLDA. Residues 221-223 carry the DXD motif motif; that stretch reads DAD. Residue Asp223 coordinates Mn(2+). The active-site Proton acceptor is the Glu253. Arg293 is a glycosylation site (N-beta-linked (GlcNAc) arginine; by autocatalysis). Mn(2+) contacts are provided by Asn320 and Ser322. UDP-N-acetyl-alpha-D-glucosamine is bound by residues Ser322 and 327-329; that span reads SSW.

This sequence belongs to the glycosyltransferase NleB family. Requires Mn(2+) as cofactor. In terms of processing, auto-glycosylated: arginine GlcNAcylation is required for activity toward death domain-containing host target proteins.

It is found in the secreted. It localises to the host cytoplasm. It catalyses the reaction L-arginyl-[protein] + UDP-N-acetyl-alpha-D-glucosamine = N(omega)-(N-acetyl-beta-D-glucosaminyl)-L-arginyl-[protein] + UDP + H(+). Protein-arginine N-acetylglucosaminyltransferase activity is inhibited by 100066N compound (flavone analog) and 102644N compound (a substituted isoxazole). In terms of biological role, protein-arginine N-acetylglucosaminyltransferase effector that disrupts TNF signaling in infected cells, including NF-kappa-B signaling, apoptosis and necroptosis. Acts by catalyzing the transfer of a single N-acetylglucosamine (GlcNAc) to a conserved arginine residue in the death domain of host proteins such as FADD: arginine GlcNAcylation prevents homotypic/heterotypic death domain interactions and assembly of the oligomeric TNF-alpha receptor complex, thereby disrupting TNF signaling. Also acts on host proteins without a death domain: catalyzes arginine GlcNAcylation of host GAPDH protein, thereby preventing GAPDH interaction with TRAF2, leading to inhibit NF-kappa-B signaling. Catalyzes auto-GlcNAcylation, which is required for activity toward death domain-containing host target proteins. This Escherichia coli O157:H7 protein is Protein-arginine N-acetylglucosaminyltransferase NleB1.